Here is a 302-residue protein sequence, read N- to C-terminus: Dihydroorotate dehydrogenase B (NAD(+)), catalytic subunit (302 aa).

FMN is bound by residues S20 and 44-45 (KG). Substrate is bound by residues K44 and 68 to 72 (NSVGL). The FMN site is built by N98 and N125. N125 contributes to the substrate binding site. The active-site Nucleophile is C128. FMN contacts are provided by K163 and I189. 190 to 191 (NT) contacts substrate. FMN-binding positions include G215, 241-242 (GG), and 263-264 (GT).

The protein belongs to the dihydroorotate dehydrogenase family. Type 1 subfamily. In terms of assembly, heterotetramer of 2 PyrK and 2 PyrD type B subunits. It depends on FMN as a cofactor.

Its subcellular location is the cytoplasm. The catalysed reaction is (S)-dihydroorotate + NAD(+) = orotate + NADH + H(+). It functions in the pathway pyrimidine metabolism; UMP biosynthesis via de novo pathway; orotate from (S)-dihydroorotate (NAD(+) route): step 1/1. Its function is as follows. Catalyzes the conversion of dihydroorotate to orotate with NAD(+) as electron acceptor. This Thermoanaerobacter sp. (strain X514) protein is Dihydroorotate dehydrogenase B (NAD(+)), catalytic subunit (pyrD).